Here is a 479-residue protein sequence, read N- to C-terminus: Pre-glycoprotein polyprotein GP complex (479 aa).

A lipid anchor (N-myristoyl glycine; by host) is attached at glycine 2. Over 2–17 (GQLISFFQDIPIFFEE) the chain is Extracellular. The chain crosses the membrane as a helical span at residues 18 to 32 (ALNVALAVVTLLAII). Position 33 (lysine 33) is a topological domain, cytoplasmic. The helical transmembrane segment at 34-53 (GIVNVWKSGILQLFVFLVLA) threads the bilayer. 2 consecutive stretches face the extracellular side: residues 54-58 (GRSCS) and 59-418 (FKVG…TLVD). Cysteine 57 contacts Zn(2+). 3 disulfide bridges follow: cysteine 85–cysteine 221, cysteine 265–cysteine 278, and cysteine 287–cysteine 296. Residues asparagine 88, asparagine 125, asparagine 174, asparagine 202, and asparagine 214 are each glycosylated (N-linked (GlcNAc...) asparagine; by host). 5 N-linked (GlcNAc...) asparagine; by host glycosylation sites follow: asparagine 314, asparagine 351, asparagine 359, asparagine 376, and asparagine 381. Cysteine 350 and cysteine 371 form a disulfide bridge. The chain crosses the membrane as a helical span at residues 419–439 (LCFWSAIFFTTSLFLHLVGFP). Residues 440–479 (THRHIQGDPCPLPHRLDRNGACRCGRFQKLGKQVTWKRKH) are Cytoplasmic-facing. Zn(2+) contacts are provided by histidine 441, histidine 443, cysteine 449, histidine 453, cysteine 461, cysteine 463, and histidine 479.

Belongs to the arenaviridae GPC protein family. As to quaternary structure, homotetramer; disulfide-linked. In terms of assembly, homotetramer. GP2 homotetramers bind through ionic interactions with GP1 homotetramers to form the GP complex together with the stable signal peptide. The GP-C polyprotein interacts with the host protease MBTPS1/SKI-1 resulting in the polyprotein processing. In terms of processing, specific enzymatic cleavages in vivo yield mature proteins. GP-C polyprotein is cleaved in the endoplasmic reticulum by the host protease MBTPS1. Only cleaved glycoprotein is incorporated into virions. Post-translationally, the SSP remains stably associated with the GP complex following cleavage by signal peptidase and plays crucial roles in the trafficking of GP through the secretory pathway. Myristoylation is necessary for GP2-mediated fusion activity.

It localises to the virion membrane. The protein resides in the host endoplasmic reticulum membrane. It is found in the host Golgi apparatus membrane. Its subcellular location is the host cell membrane. Interacts with the host receptor. Mediates virus attachment to host TFRC. This attachment induces virion internalization predominantly through clathrin-mediated endocytosis. Its function is as follows. Class I viral fusion protein that directs fusion of viral and host endosomal membranes, leading to delivery of the nucleocapsid into the cytoplasm. Membrane fusion is mediated by irreversible conformational changes induced upon acidification in the endosome. In terms of biological role, stable signal peptide (SSP): cleaved and functions as a signal peptide. In addition, it is also retained as the third component of the GP complex. The SSP is required for efficient glycoprotein expression, post-translational maturation cleavage of GP1 and GP2, glycoprotein transport to the cell surface plasma membrane, formation of infectious virus particles, and acid pH-dependent glycoprotein-mediated cell fusion. The protein is Pre-glycoprotein polyprotein GP complex of Homo sapiens (Human).